Here is a 147-residue protein sequence, read N- to C-terminus: Small ribosomal subunit protein uS12 (147 aa).

It belongs to the universal ribosomal protein uS12 family. As to quaternary structure, part of the 30S ribosomal subunit.

Its function is as follows. With S4 and S5 plays an important role in translational accuracy. Located at the interface of the 30S and 50S subunits. The chain is Small ribosomal subunit protein uS12 from Pyrobaculum calidifontis (strain DSM 21063 / JCM 11548 / VA1).